The primary structure comprises 526 residues: Peptide chain release factor 3 (526 aa).

Residues 8 to 277 (SKRRTFAIIS…GLTRWAPAPQ (270 aa)) form the tr-type G domain. Residues 17-24 (SHPDAGKT), 85-89 (DTPGH), and 139-142 (NKLD) each bind GTP.

This sequence belongs to the TRAFAC class translation factor GTPase superfamily. Classic translation factor GTPase family. PrfC subfamily.

The protein localises to the cytoplasm. In terms of biological role, increases the formation of ribosomal termination complexes and stimulates activities of RF-1 and RF-2. It binds guanine nucleotides and has strong preference for UGA stop codons. It may interact directly with the ribosome. The stimulation of RF-1 and RF-2 is significantly reduced by GTP and GDP, but not by GMP. This is Peptide chain release factor 3 from Vibrio atlanticus (strain LGP32) (Vibrio splendidus (strain Mel32)).